The following is a 376-amino-acid chain: N-acetyldiaminopimelate deacetylase (376 aa).

Residue Asp69 is part of the active site. Glu127 functions as the Proton acceptor in the catalytic mechanism.

Belongs to the peptidase M20A family. N-acetyldiaminopimelate deacetylase subfamily.

The catalysed reaction is N-acetyl-(2S,6S)-2,6-diaminopimelate + H2O = (2S,6S)-2,6-diaminopimelate + acetate. Its pathway is amino-acid biosynthesis; L-lysine biosynthesis via DAP pathway; LL-2,6-diaminopimelate from (S)-tetrahydrodipicolinate (acetylase route): step 3/3. Functionally, catalyzes the conversion of N-acetyl-diaminopimelate to diaminopimelate and acetate. The sequence is that of N-acetyldiaminopimelate deacetylase from Lactococcus lactis subsp. cremoris (strain SK11).